The sequence spans 95 residues: Small ribosomal subunit protein uS15 (95 aa).

The protein belongs to the universal ribosomal protein uS15 family. Part of the 30S ribosomal subunit. Forms a bridge to the 50S subunit in the 70S ribosome, contacting the 23S rRNA.

In terms of biological role, one of the primary rRNA binding proteins, it binds directly to 16S rRNA where it helps nucleate assembly of the platform of the 30S subunit by binding and bridging several RNA helices of the 16S rRNA. Its function is as follows. Forms an intersubunit bridge (bridge B4) with the 23S rRNA of the 50S subunit in the ribosome. This is Small ribosomal subunit protein uS15 from Streptomyces avermitilis (strain ATCC 31267 / DSM 46492 / JCM 5070 / NBRC 14893 / NCIMB 12804 / NRRL 8165 / MA-4680).